Consider the following 98-residue polypeptide: MCANNKSALKRAQIAERNRVRNKTYKSSVKTLMKNYLSAVQAYAANPTPESKQEAQTRLAAAYSRIDKAVKRGILHPNNGARKKSRLASKLKPIEQTA.

Residues 76–98 (HPNNGARKKSRLASKLKPIEQTA) are disordered.

Belongs to the bacterial ribosomal protein bS20 family.

Functionally, binds directly to 16S ribosomal RNA. This chain is Small ribosomal subunit protein bS20, found in Trichormus variabilis (strain ATCC 29413 / PCC 7937) (Anabaena variabilis).